The sequence spans 265 residues: NAD kinase (265 aa).

The active-site Proton acceptor is Asp-45. Residues 45 to 46 (DG), 122 to 123 (NE), Arg-148, Asp-150, 161 to 166 (TAYNKS), Ala-185, and Gln-223 contribute to the NAD(+) site.

The protein belongs to the NAD kinase family. The cofactor is a divalent metal cation.

Its subcellular location is the cytoplasm. The catalysed reaction is NAD(+) + ATP = ADP + NADP(+) + H(+). Its function is as follows. Involved in the regulation of the intracellular balance of NAD and NADP, and is a key enzyme in the biosynthesis of NADP. Catalyzes specifically the phosphorylation on 2'-hydroxyl of the adenosine moiety of NAD to yield NADP. This chain is NAD kinase, found in Enterococcus faecalis (strain ATCC 700802 / V583).